Reading from the N-terminus, the 399-residue chain is 5'-C-glycyluridine monooxygenase-decarboxylase (399 aa).

Thr179 lines the phosphate pocket. The residue at position 230 (Lys230) is an N6-(pyridoxal phosphate)lysine. Phosphate-binding residues include Arg318, Arg322, Arg353, and Arg367.

Belongs to the SelA family. As to quaternary structure, homooctamer; tetramer of homodimers. Pyridoxal 5'-phosphate is required as a cofactor.

The enzyme catalyses (5'S,6'R)-C-glycyluridine + O2 = uridine-5'-carboxamide + CO2 + H2O. It participates in antibiotic biosynthesis. Activity is dependent on phosphate. Its function is as follows. Monooxygenase-decarboxylase involved in the biosynthesis of the capuramycin-type nucleoside antibiotic A-503083. Catalyzes the oxidative decarboxylation of 5'-C-glycyluridine (GlyU) to uridine-5'-carboxamide (CarU). Is stereospecific for the (5'S,6'R)-diastereomer of GlyU. Directly incorporates a single oxygen atom from O(2) into the product CarU. The protein is 5'-C-glycyluridine monooxygenase-decarboxylase of Streptomyces sp.